A 724-amino-acid polypeptide reads, in one-letter code: Methionine--tRNA ligase (724 aa).

The 'HIGH' region signature appears at 12–22; the sequence is PYVNNIPHLGN. Zn(2+) is bound by residues C143, C146, C155, and C158. The short motif at 330-334 is the 'KMSKS' region element; it reads KFSKS. Residue K333 coordinates ATP. Residues 560–665 enclose the tRNA-binding domain; that stretch reads FREKVLLRVV…KNPIAGERII (106 aa).

It belongs to the class-I aminoacyl-tRNA synthetase family. MetG type 1 subfamily. Homodimer. Requires Zn(2+) as cofactor.

The protein resides in the cytoplasm. It catalyses the reaction tRNA(Met) + L-methionine + ATP = L-methionyl-tRNA(Met) + AMP + diphosphate. In terms of biological role, is required not only for elongation of protein synthesis but also for the initiation of all mRNA translation through initiator tRNA(fMet) aminoacylation. This chain is Methionine--tRNA ligase, found in Borreliella afzelii (strain PKo) (Borrelia afzelii).